Reading from the N-terminus, the 322-residue chain is tRNA uridine(34) hydroxylase (322 aa).

One can recognise a Rhodanese domain in the interval 125-219; sequence QDPNTIVIDA…YGKDPEVQGK (95 aa). The Cysteine persulfide intermediate role is filled by Cys179.

It belongs to the TrhO family.

The enzyme catalyses uridine(34) in tRNA + AH2 + O2 = 5-hydroxyuridine(34) in tRNA + A + H2O. Its function is as follows. Catalyzes oxygen-dependent 5-hydroxyuridine (ho5U) modification at position 34 in tRNAs. This is tRNA uridine(34) hydroxylase from Bacillus subtilis (strain 168).